Consider the following 166-residue polypeptide: Urease accessory protein UreE (166 aa).

Belongs to the UreE family.

Its subcellular location is the cytoplasm. Involved in urease metallocenter assembly. Binds nickel. Probably functions as a nickel donor during metallocenter assembly. The protein is Urease accessory protein UreE of Pseudomonas savastanoi pv. phaseolicola (strain 1448A / Race 6) (Pseudomonas syringae pv. phaseolicola (strain 1448A / Race 6)).